We begin with the raw amino-acid sequence, 335 residues long: Glyceraldehyde-3-phosphate dehydrogenase (335 aa).

NAD(+) contacts are provided by residues 10 to 11, Asp-33, Arg-77, and Ser-119; that span reads RI. Residues 150 to 152, Thr-181, 210 to 211, and Arg-233 contribute to the D-glyceraldehyde 3-phosphate site; these read SCT and TG. Cys-151 functions as the Nucleophile in the catalytic mechanism. Asn-315 serves as a coordination point for NAD(+).

Belongs to the glyceraldehyde-3-phosphate dehydrogenase family. As to quaternary structure, homotetramer.

It localises to the cytoplasm. The catalysed reaction is D-glyceraldehyde 3-phosphate + phosphate + NAD(+) = (2R)-3-phospho-glyceroyl phosphate + NADH + H(+). It functions in the pathway carbohydrate degradation; glycolysis; pyruvate from D-glyceraldehyde 3-phosphate: step 1/5. Functionally, catalyzes the oxidative phosphorylation of glyceraldehyde 3-phosphate (G3P) to 1,3-bisphosphoglycerate (BPG) using the cofactor NAD. The first reaction step involves the formation of a hemiacetal intermediate between G3P and a cysteine residue, and this hemiacetal intermediate is then oxidized to a thioester, with concomitant reduction of NAD to NADH. The reduced NADH is then exchanged with the second NAD, and the thioester is attacked by a nucleophilic inorganic phosphate to produce BPG. The chain is Glyceraldehyde-3-phosphate dehydrogenase (gap) from Chlamydia pneumoniae (Chlamydophila pneumoniae).